A 596-amino-acid chain; its full sequence is Elongation factor 4 (596 aa).

The 182-residue stretch at 2–183 (NNIRNFSIIA…TIIRKIPPPK (182 aa)) folds into the tr-type G domain. Residues 14 to 19 (DHGKST) and 130 to 133 (NKID) each bind GTP.

The protein belongs to the TRAFAC class translation factor GTPase superfamily. Classic translation factor GTPase family. LepA subfamily.

Its subcellular location is the cell inner membrane. It catalyses the reaction GTP + H2O = GDP + phosphate + H(+). Its function is as follows. Required for accurate and efficient protein synthesis under certain stress conditions. May act as a fidelity factor of the translation reaction, by catalyzing a one-codon backward translocation of tRNAs on improperly translocated ribosomes. Back-translocation proceeds from a post-translocation (POST) complex to a pre-translocation (PRE) complex, thus giving elongation factor G a second chance to translocate the tRNAs correctly. Binds to ribosomes in a GTP-dependent manner. The polypeptide is Elongation factor 4 (Campylobacter fetus subsp. fetus (strain 82-40)).